We begin with the raw amino-acid sequence, 318 residues long: Probable endolytic peptidoglycan transglycosylase RlpA (318 aa).

An N-terminal signal peptide occupies residues 1–21; it reads MMDKRVVAVAAVLWNVQMLFA. The tract at residues 121-191 is disordered; that stretch reads DPNAHASQQR…GVANTTDVPA (71 aa). The segment covering 125-137 has biased composition (polar residues); that stretch reads HASQQRNDRQTSP.

It belongs to the RlpA family.

Lytic transglycosylase with a strong preference for naked glycan strands that lack stem peptides. This Treponema pallidum (strain Nichols) protein is Probable endolytic peptidoglycan transglycosylase RlpA.